Consider the following 198-residue polypeptide: Recombination protein RecR (198 aa).

The segment at 58-73 adopts a C4-type zinc-finger fold; the sequence is CSVCGNFTDKDPCAIC. Positions 81–175 constitute a Toprim domain; the sequence is NTICVVEHPK…KVTRIAHGIP (95 aa).

It belongs to the RecR family.

In terms of biological role, may play a role in DNA repair. It seems to be involved in an RecBC-independent recombinational process of DNA repair. It may act with RecF and RecO. This chain is Recombination protein RecR, found in Clostridium tetani (strain Massachusetts / E88).